The following is an 86-amino-acid chain: High affinity immunoglobulin epsilon receptor subunit gamma (86 aa).

The N-terminal stretch at 1–18 (MIPAVILFLLLLVEEAAA) is a signal peptide. At 19–23 (LGEPQ) the chain is on the extracellular side. A helical transmembrane segment spans residues 24 to 44 (LCYILDAILFLYGIVLTLLYC). Residues 45 to 86 (RLKIQVRKADIASREKSDAVYTGLNTRNQETYETLKHEKPPQ) lie on the Cytoplasmic side of the membrane. The 29-residue stretch at 54-82 (DIASREKSDAVYTGLNTRNQETYETLKHE) folds into the ITAM domain. A phosphotyrosine mark is found at Tyr-65 and Tyr-76. The residue at position 78 (Thr-78) is a Phosphothreonine.

Belongs to the CD3Z/FCER1G family. IgE Fc receptor is a tetramer of an alpha chain, a beta chain, and two disulfide linked gamma chains. Associates with FCGR1A to form a functional receptor complex. The signaling subunit of immunoglobulin gamma (IgG) Fc receptor complex. As a homodimer or a heterodimer of CD247 and FCER1G, associates with the ligand binding subunit FCGR3A to form a functional receptor complex. Associates with CLEC6A. Interacts with CLEC4E. Interacts (via ITAM domain) with SYK (via SH2 domains); activates SYK, enabling integrin-mediated activation of neutrophils and macrophages. Interacts with common beta chain of interleukin 3 receptor CSF2RB and recruits SYK in response to IL3 stimulation; this interaction is direct. Interacts with CD300LH; the interaction may be indirect. Interacts with CD300LD. Interacts with TARM1. As to expression, expressed in leukocytes and pinealocytes. Expression in the pineal gland does not undergo circadian variations.

Its subcellular location is the cell membrane. In terms of biological role, adapter protein containing an immunoreceptor tyrosine-based activation motif (ITAM) that transduces activation signals from various immunoreceptors. As a component of the high-affinity immunoglobulin E (IgE) receptor, mediates allergic inflammatory signaling in mast cells. As a constitutive component of interleukin-3 receptor complex, selectively mediates interleukin 4/IL4 production by basophils priming T-cells toward effector T-helper 2 subset. Associates with pattern recognition receptors CLEC4D and CLEC4E to form a functional signaling complex in myeloid cells. Binding of mycobacterial trehalose 6,6'-dimycolate (TDM) to this receptor complex leads to phosphorylation of ITAM, triggering activation of SYK, CARD9 and NF-kappa-B, consequently driving maturation of antigen-presenting cells and shaping antigen-specific priming of T-cells toward effector T-helper 1 and T-helper 17 cell subtypes. May function cooperatively with other activating receptors. Functionally linked to integrin beta-2/ITGB2-mediated neutrophil activation. Also involved in integrin alpha-2/ITGA2-mediated platelet activation. The protein is High affinity immunoglobulin epsilon receptor subunit gamma (Fcer1g) of Rattus norvegicus (Rat).